Here is a 406-residue protein sequence, read N- to C-terminus: Betaine--homocysteine S-methyltransferase 1 (406 aa).

The region spanning 11–314 (KGILERLNAG…YHIRAIAEEL (304 aa)) is the Hcy-binding domain. Residues lysine 40, lysine 93, and lysine 98 each carry the N6-succinyllysine modification. Cysteine 217 contributes to the Zn(2+) binding site. N6-succinyllysine is present on residues lysine 232 and lysine 241. The Zn(2+) site is built by cysteine 299 and cysteine 300. Residue serine 330 is modified to Phosphoserine. Residues lysine 340 and lysine 377 each carry the N6-succinyllysine modification.

In terms of assembly, homotetramer. The cofactor is Zn(2+).

It localises to the cytoplasm. It is found in the cytosol. The protein resides in the nucleus. The enzyme catalyses L-homocysteine + glycine betaine = N,N-dimethylglycine + L-methionine. It participates in amine and polyamine degradation; betaine degradation; sarcosine from betaine: step 1/2. It functions in the pathway amino-acid biosynthesis; L-methionine biosynthesis via de novo pathway; L-methionine from L-homocysteine (BhmT route): step 1/1. Its function is as follows. Involved in the regulation of homocysteine metabolism. Converts betaine and homocysteine to dimethylglycine and methionine, respectively. This reaction is also required for the irreversible oxidation of choline. The sequence is that of Betaine--homocysteine S-methyltransferase 1 (BHMT) from Pongo abelii (Sumatran orangutan).